A 130-amino-acid polypeptide reads, in one-letter code: uncharacterized protein (130 aa).

The helical transmembrane segment at leucine 15–alanine 31 threads the bilayer.

The protein resides in the membrane. This is an uncharacterized protein from Saccharomyces cerevisiae (strain ATCC 204508 / S288c) (Baker's yeast).